We begin with the raw amino-acid sequence, 606 residues long: Granule-bound starch synthase 1, chloroplastic/amyloplastic (606 aa).

A chloroplast-targeting transit peptide spans 1-76 (MSALTTSQLA…GSRRFPSVVV (76 aa)). Residues 29-67 (RHGFQGLKPRSPAGGDASSLSVTTSARATPKQQRSVQRG) are disordered. Residues 46-66 (SSLSVTTSARATPKQQRSVQR) are compositionally biased toward polar residues. Lys97 serves as a coordination point for ADP-alpha-D-glucose.

The protein belongs to the glycosyltransferase 1 family. Bacterial/plant glycogen synthase subfamily.

The protein localises to the plastid. It localises to the chloroplast. The protein resides in the amyloplast. The enzyme catalyses an NDP-alpha-D-glucose + [(1-&gt;4)-alpha-D-glucosyl](n) = [(1-&gt;4)-alpha-D-glucosyl](n+1) + a ribonucleoside 5'-diphosphate + H(+). It functions in the pathway glycan biosynthesis; starch biosynthesis. Its function is as follows. Required for the synthesis of amylose in endosperm. This chain is Granule-bound starch synthase 1, chloroplastic/amyloplastic (WAXY), found in Oryza sativa (Rice).